A 299-amino-acid chain; its full sequence is Rhodanese-like/PpiC domain-containing protein 12, chloroplastic (299 aa).

A chloroplast-targeting transit peptide spans 1 to 81 (MFRVTGTLSA…SGFPALKMRA (81 aa)). Ser82 is modified (N-acetylserine). A PpiC domain is found at 93–183 (SREILVQHLL…FGLHLLQVLS (91 aa)). Residues 205 to 297 (FMDEAQLIDV…YSLKVDPSIP (93 aa)) form the Rhodanese domain. Cys257 acts as the Cysteine persulfide intermediate in catalysis.

Its subcellular location is the plastid. The protein resides in the chloroplast. This Arabidopsis thaliana (Mouse-ear cress) protein is Rhodanese-like/PpiC domain-containing protein 12, chloroplastic.